We begin with the raw amino-acid sequence, 214 residues long: ATP-dependent Clp protease proteolytic subunit 3 (214 aa).

The active-site Nucleophile is the S106. The active site involves H131.

Belongs to the peptidase S14 family. As to quaternary structure, fourteen ClpP subunits assemble into 2 heptameric rings which stack back to back to give a disk-like structure with a central cavity, resembling the structure of eukaryotic proteasomes.

The protein localises to the cytoplasm. The enzyme catalyses Hydrolysis of proteins to small peptides in the presence of ATP and magnesium. alpha-casein is the usual test substrate. In the absence of ATP, only oligopeptides shorter than five residues are hydrolyzed (such as succinyl-Leu-Tyr-|-NHMec, and Leu-Tyr-Leu-|-Tyr-Trp, in which cleavage of the -Tyr-|-Leu- and -Tyr-|-Trp bonds also occurs).. In terms of biological role, cleaves peptides in various proteins in a process that requires ATP hydrolysis. Has a chymotrypsin-like activity. Plays a major role in the degradation of misfolded proteins. The protein is ATP-dependent Clp protease proteolytic subunit 3 of Trichormus variabilis (strain ATCC 29413 / PCC 7937) (Anabaena variabilis).